Here is a 429-residue protein sequence, read N- to C-terminus: Protein arginine N-methyltransferase 2 (429 aa).

Disordered regions lie at residues 41-76 (PEVA…EDHE) and 137-180 (ALDS…EETP). Residues 137-163 (ALDSDDEDDEEMAEGEEAQAEDGEEAP) are compositionally biased toward acidic residues. Low complexity predominate over residues 164–174 (ELVAAEEATQT). Residues 190-429 (LEEQVTSDKY…YRLPVCTFLG (240 aa)) form the RMT2 domain. S-adenosyl-L-methionine contacts are provided by residues Tyr-199, Met-228, 250-255 (FGMGII), 271-273 (EAH), 308-309 (WQ), and Asp-328.

It belongs to the class I-like SAM-binding methyltransferase superfamily. RMT2 methyltransferase family. In terms of assembly, monomer.

It is found in the cytoplasm. The protein resides in the nucleus. In terms of biological role, S-adenosyl-L-methionine-dependent protein-arginine N-methyltransferase that methylates the delta-nitrogen atom of arginine residues to form N5-methylarginine (type IV) in target proteins. Monomethylates ribosomal protein L12. The chain is Protein arginine N-methyltransferase 2 from Neurospora crassa (strain ATCC 24698 / 74-OR23-1A / CBS 708.71 / DSM 1257 / FGSC 987).